Consider the following 347-residue polypeptide: Haptoglobin (347 aa).

The signal sequence occupies residues 1–18 (MSALGAVIALLLWGQLFA). The Sushi domain maps to 31–88 (DGCPKPPEIANGYVEHLVRYQCKKYYRLRTEGDGVYTLNNEKQWTNKAVGDKLPECEA). 4 disulfides stabilise this stretch: Cys52–Cys86, Cys90–Cys207, Cys250–Cys281, and Cys292–Cys322. A Peptidase S1 domain is found at 103 to 345 (ILGGHLDAKG…IQDWVQKTIA (243 aa)). N-linked (GlcNAc...) asparagine glycans are attached at residues Asn125, Asn148, Asn152, and Asn182. The segment at 259–264 (VPEKKT) is interaction with CD163.

The protein belongs to the peptidase S1 family. Tetramer of two alpha and two beta chains; disulfide-linked. The hemoglobin/haptoglobin complex is composed of a haptoglobin dimer bound to two hemoglobin alpha-beta dimers. Interacts with CD163. Interacts with ERGIC3. In terms of tissue distribution, expressed by the liver and secreted in plasma.

It localises to the secreted. In terms of biological role, as a result of hemolysis, hemoglobin is found to accumulate in the kidney and is secreted in the urine. Haptoglobin captures, and combines with free plasma hemoglobin to allow hepatic recycling of heme iron and to prevent kidney damage. Haptoglobin also acts as an antioxidant, has antibacterial activity and plays a role in modulating many aspects of the acute phase response. Hemoglobin/haptoglobin complexes are rapidly cleared by the macrophage CD163 scavenger receptor expressed on the surface of liver Kupfer cells through an endocytic lysosomal degradation pathway. The sequence is that of Haptoglobin (HP) from Ateles geoffroyi (Black-handed spider monkey).